We begin with the raw amino-acid sequence, 364 residues long: Trans-enoyl reductase sthE (364 aa).

51-54 (TDYK) serves as a coordination point for NADP(+). 137 to 144 (WGTAALAI) contributes to the substrate binding site. Residues 172–175 (ATAT), 195–198 (SESS), Tyr213, and 261–262 (LE) each bind NADP(+). 281–285 (GFEGQ) is a substrate binding site. 351–352 (VK) is an NADP(+) binding site.

Belongs to the zinc-containing alcohol dehydrogenase family. As to quaternary structure, monomer.

The catalysed reaction is 7 malonyl-CoA + acetyl-CoA + 10 AH2 + 5 S-adenosyl-L-methionine + 2 H(+) = dehydroprobetaenone I + 10 A + 5 S-adenosyl-L-homocysteine + 7 CO2 + 8 CoA + 6 H2O. The protein operates within mycotoxin biosynthesis. Its function is as follows. Trans-enoyl reductase; part of the gene cluster that mediates the biosynthesis of the phytotoxin stemphyloxin II. The first step of the pathway is the synthesis of dehydroprobetaenone I by the polyketide synthase sthA and the enoyl reductase sthE via condensation of one acetyl-CoA starter unit with 7 malonyl-CoA units and 5 methylations. The C-terminal reductase (R) domain of sthA catalyzes the reductive release of the polyketide chain. Because sthA lacks a designated enoylreductase (ER) domain, the required activity is provided the enoyl reductase sthE. The short-chain dehydrogenase/reductase sthC then catalyzes reduction of dehydroprobetaenone I to probetaenone I. The cytochrome P450 monooxygenase sthF catalyzes successive epoxidation, oxidation (resulting from epoxide opening) and hydroxylation to install a tertiary alcohol in the decaline ring to yield betaenone C from dehydroprobetaenone I and betaenone B from probetaenone I. The FAD-linked oxidoreductase sthB is responsible for the conversion of betaenone C to betaenone A via an intramolecular aldol reaction between C-1 and C-17 to form the bridged tricyclic system in betaenone A. Finally, the cytochrome P450 monooxygenase sthD catalyzes the hydroxylation of C-15 to afford the final metabolite stemphyloxin II. This is Trans-enoyl reductase sthE from Phaeosphaeria nodorum (strain SN15 / ATCC MYA-4574 / FGSC 10173) (Glume blotch fungus).